Reading from the N-terminus, the 153-residue chain is Transthyretin (153 aa).

Residues 1–19 (MASFKSFLLLALLAIVSEA) form the signal peptide. At C34 the chain carries Sulfocysteine. Residues K39 and E78 each contribute to the L-thyroxine site. N-linked (GlcNAc...) asparagine glycosylation is present at N81. An L-thyroxine-binding site is contributed by S141.

This sequence belongs to the transthyretin family. As to quaternary structure, homotetramer. Dimer of dimers. In the homotetramer, subunits assemble around a central channel that can accommodate two ligand molecules. Interacts with rbp4. Post-translationally, sulfonation of the reactive cysteine Cys-34 enhances the stability of the native conformation of TTR, avoiding misassembly of the protein leading to amyloid formation. As to expression, detected in plasma (at protein level). Expressed during metamorphosis in tadpole liver, but not in tadpole brain nor adult liver. Between 1.5 and 3 days of development, also expressed in the mesoderm of the kidney.

It localises to the secreted. In terms of biological role, thyroid hormone-binding protein, with a much higher binding affinity for triiodothyronine (T3) than for thyroxine (T4). Probably transports triiodothyronine from the bloodstream to the brain. This is Transthyretin (ttr) from Xenopus laevis (African clawed frog).